The sequence spans 183 residues: Pyruvoyl-dependent arginine decarboxylase 2 (183 aa).

Ser41 bears the Pyruvic acid (Ser) mark.

Belongs to the PdaD family. Pyruvate serves as cofactor.

The catalysed reaction is L-arginine + H(+) = agmatine + CO2. The sequence is that of Pyruvoyl-dependent arginine decarboxylase 2 (pdaD2) from Methanosarcina acetivorans (strain ATCC 35395 / DSM 2834 / JCM 12185 / C2A).